The sequence spans 67 residues: Conotoxin LeDr192 (67 aa).

The signal sequence occupies residues 1–19 (MRCFPVFIILLLLIASAPC). A propeptide spanning residues 20 to 49 (FDARTKTDDDVPLSPLRDNLKRTIRTRLNI) is cleaved from the precursor. Thr65 carries the threonine amide modification.

Belongs to the conotoxin T superfamily. In terms of processing, contains 2 disulfide bonds that can be either 'C1-C3, C2-C4' or 'C1-C4, C2-C3', since these disulfide connectivities have been observed for conotoxins with cysteine framework V (for examples, see AC P0DQQ7 and AC P81755). Expressed by the venom duct.

The protein resides in the secreted. In Conus litteratus (Lettered cone), this protein is Conotoxin LeDr192.